A 671-amino-acid polypeptide reads, in one-letter code: APC membrane recruitment protein 2 (671 aa).

Disordered regions lie at residues 1–24, 76–358, 391–414, and 444–598; these read METSRSRGGGGAVSERGGAGASVG, SGGT…SDPS, EAGPSCDKHVPGPGKPALSKKNPG, and SQTE…PLRT. Gly residues-rich tracts occupy residues 7-21 and 126-137; these read RGGGGAVSERGGAGA and GGDSGGGGGGRP. S162 is modified (phosphoserine). The segment covering 171–182 has biased composition (basic and acidic residues); sequence GRSENGKGEPVD. A phosphoserine mark is found at S229 and S233. Basic and acidic residues-rich tracts occupy residues 236 to 260, 276 to 286, and 295 to 307; these read CVKEETPRAAREPEEPSQDAPRDPA, APARSCREAEG, and ARGEDAAGHRRAE. Over residues 342-353 the composition is skewed to low complexity; it reads APAAPDPASVDP. A phosphoserine mark is found at S355 and S358. The segment covering 447–458 has biased composition (low complexity); sequence EEQGPEPQEGAA. Composition is skewed to basic and acidic residues over residues 472 to 487 and 498 to 514; these read TPKDTRCVEAAKDASS and IEPHPKEEPKHPEKEQQ.

The protein belongs to the Amer family. As to quaternary structure, interacts with APC.

Its subcellular location is the cell membrane. Negative regulator of the canonical Wnt signaling pathway involved in neuroectodermal patterning. Acts by specifically binding phosphatidylinositol 4,5-bisphosphate (PtdIns(4,5)P2), translocating to the cell membrane and interacting with key regulators of the canonical Wnt signaling pathway, such as components of the beta-catenin destruction complex. The polypeptide is APC membrane recruitment protein 2 (AMER2) (Homo sapiens (Human)).